We begin with the raw amino-acid sequence, 392 residues long: L-rhamnonate dehydratase (392 aa).

2 residues coordinate substrate: H22 and R48. D214, E240, and E268 together coordinate Mg(2+). Residue H318 is the Proton acceptor of the active site. E338 provides a ligand contact to substrate.

The protein belongs to the mandelate racemase/muconate lactonizing enzyme family. RhamD subfamily. As to quaternary structure, homooctamer; tetramer of dimers. Mg(2+) serves as cofactor.

The catalysed reaction is L-rhamnonate = 2-dehydro-3-deoxy-L-rhamnonate + H2O. Functionally, catalyzes the dehydration of L-rhamnonate to 2-keto-3-deoxy-L-rhamnonate (KDR). The sequence is that of L-rhamnonate dehydratase from Paraburkholderia xenovorans (strain LB400).